The following is a 276-amino-acid chain: Extracellular metalloprotease 1 (276 aa).

The N-terminal stretch at 1–18 (MRVSVPVLALAFGSLAAA) is a signal peptide. His-191 contacts Zn(2+). Glu-192 is an active-site residue. His-195 lines the Zn(2+) pocket. A disordered region spans residues 211-233 (GDYVSDTPPQRSPSSGCPVGRDS). Cys-227 and Cys-253 are oxidised to a cystine.

Belongs to the peptidase M43B family.

The protein localises to the secreted. Functionally, secreted metalloproteinase that allows assimilation of proteinaceous substrates. Pays a pivotal role as a pathogenicity determinant during infections and contributes to the ability of the pathogen to persist within the mammalian host. Digests an immunodominant cell surface antigen (SOWgp) and prevents host recognition of endospores during the phase of development when these fungal cells are most vulnerable to phagocytic cell defenses. The sequence is that of Extracellular metalloprotease 1 (MEP1) from Coccidioides posadasii (strain C735) (Valley fever fungus).